The primary structure comprises 273 residues: Outer surface protein A (273 aa).

The signal sequence occupies residues 1 to 16 (MKKYLLGIGLILALIA). Residue C17 is the site of N-palmitoyl cysteine attachment. Residue C17 is the site of S-diacylglycerol cysteine attachment.

Belongs to the OspA lipoprotein family.

It localises to the cell outer membrane. Its subcellular location is the cell surface. The sequence is that of Outer surface protein A from Borreliella burgdorferi (Lyme disease spirochete).